Reading from the N-terminus, the 299-residue chain is MKRPDYRTLQALDAVIRERGFERAAQKLCITQSAVSQRIKQLENMFGQPLLVRTVPPRPTEQGQKLLALLHQVELLEEEWLGDDNSGTTPLLLSLAVNADSLATWLLPALKTVLTDSPVRLNIQVEDETRTQERLRRGEVVGAVSIQPQPLPSCLVDRLGALDYLFVGSKEFAARYFPNGVTRSALLKAPAVAFDHLDDMHQAFLQQNFDLSPGSVPCHIVNSSEAFVQLARQGTTCCMIPHLQIERELAEGELIDLTPGLLQRRMLYWHRFSPESRLMRKVTDALLAHGHRVLRQDTA.

The region spanning 4 to 60 (PDYRTLQALDAVIRERGFERAAQKLCITQSAVSQRIKQLENMFGQPLLVRTVPPRPT) is the HTH lysR-type domain. Residues 21 to 40 (FERAAQKLCITQSAVSQRIK) constitute a DNA-binding region (H-T-H motif).

This sequence belongs to the LysR transcriptional regulatory family. As to quaternary structure, homodimer.

Controls the transcription of genes involved in arginine and lysine metabolism. The chain is HTH-type transcriptional regulator ArgP from Erwinia tasmaniensis (strain DSM 17950 / CFBP 7177 / CIP 109463 / NCPPB 4357 / Et1/99).